A 788-amino-acid chain; its full sequence is Elongator complex protein 2 (788 aa).

8 WD repeats span residues 13–51 (GANK…NKGV), 57–96 (GHEA…HLQC), 102–139 (HYSK…DEFG), 200–243 (GHED…LIDD), 279–318 (GHDD…GIWV), 336–377 (GSSG…ICDQ), 383–422 (GATK…ASGR), and 437–475 (IHGY…AGML). Residues 490–530 (PDSATVPVLGLSNKAGEDDANEDDEEEEGGNKETPDITDPL) are disordered. A Phosphoserine modification is found at Ser492. Acidic residues predominate over residues 507–517 (DDANEDDEEEE). WD repeat units follow at residues 556 to 600 (GHGF…EIKP), 604 to 643 (FHSL…NTFE), 651 to 692 (PHTR…ADDY), 699 to 742 (KHTK…FELI), and 750 to 788 (TPAD…LAYE).

The protein belongs to the WD repeat ELP2 family. In terms of assembly, component of the elongator complex which consists of ELP1/IKI3, ELP2, ELP3, ELP4, ELP5/IKI1 and ELP6. The elongator complex is composed of two copies of the Elp123 subcomplex (composed of ELP1/IKI3, ELP2 and ELP3) and two copies of the Elp456 subcomplex (composed of ELP4, ELP5/IKI1 and ELP6). The Elp123 subcomplex forms a two-lobed scaffold, which binds the Elp456 subcomplex asymmetrically. In the complex, ELP2 interacts with ELP1/IKI3. In each lobe, ELP2 is tightly sandwiched between ELP1/IKI3 and ELP3. The Elp123 subcomplex binds tRNA through ELP1/IKI3 and ELP3 and can bind 2 tRNAs simultaneously. tRNA-binding induces conformational rearrangements which precisely position the targeted anticodon base in the active site. The Elp456 subcomplex binds tRNA and has ATPase activity. Interacts with KTI11/DPH3.

It is found in the cytoplasm. The protein resides in the nucleus. Its pathway is tRNA modification; 5-methoxycarbonylmethyl-2-thiouridine-tRNA biosynthesis. Functionally, component of the elongator complex, a multiprotein complex which is required for multiple tRNA modifications, including mcm5U (5-methoxycarbonylmethyl uridine), mcm5s2U (5-methoxycarbonylmethyl-2-thiouridine), and ncm5U (5-carbamoylmethyl uridine). The elongator complex catalyzes formation of carboxymethyluridine in the wobble base at position 34 in tRNAs. It functions as a gamma-toxin target (TOT); disruption of the complex confers resistance to Kluyveromyces lactis toxin zymocin (pGKL1 killer toxin). May also be involved in sensitivity to Pichia inositovora toxin. ELP2 binds to microtubules. Independently, ELP2 may be involved in polarized exocytosis. The chain is Elongator complex protein 2 (ELP2) from Saccharomyces cerevisiae (strain ATCC 204508 / S288c) (Baker's yeast).